The following is a 79-amino-acid chain: Small ribosomal subunit protein bS20 (79 aa).

The protein belongs to the bacterial ribosomal protein bS20 family.

Its function is as follows. Binds directly to 16S ribosomal RNA. This Karelsulcia muelleri (strain GWSS) (Sulcia muelleri) protein is Small ribosomal subunit protein bS20.